A 130-amino-acid polypeptide reads, in one-letter code: Small ribosomal subunit protein uS9 (130 aa).

Belongs to the universal ribosomal protein uS9 family.

The protein is Small ribosomal subunit protein uS9 of Buchnera aphidicola subsp. Baizongia pistaciae (strain Bp).